The chain runs to 251 residues: uncharacterized protein (251 aa).

This is an uncharacterized protein from Acanthamoeba polyphaga mimivirus (APMV).